The following is a 201-amino-acid chain: dITP/XTP pyrophosphatase (201 aa).

Thr7–Lys12 contacts substrate. Residues Glu40 and Asp69 each contribute to the Mg(2+) site. Catalysis depends on Asp69, which acts as the Proton acceptor. Substrate is bound by residues Ser70, Phe152–Asp155, Lys175, and His180–Arg181.

Belongs to the HAM1 NTPase family. As to quaternary structure, homodimer. Mg(2+) is required as a cofactor.

The catalysed reaction is XTP + H2O = XMP + diphosphate + H(+). It carries out the reaction dITP + H2O = dIMP + diphosphate + H(+). The enzyme catalyses ITP + H2O = IMP + diphosphate + H(+). Pyrophosphatase that catalyzes the hydrolysis of nucleoside triphosphates to their monophosphate derivatives, with a high preference for the non-canonical purine nucleotides XTP (xanthosine triphosphate), dITP (deoxyinosine triphosphate) and ITP. Seems to function as a house-cleaning enzyme that removes non-canonical purine nucleotides from the nucleotide pool, thus preventing their incorporation into DNA/RNA and avoiding chromosomal lesions. The protein is dITP/XTP pyrophosphatase of Desulforamulus reducens (strain ATCC BAA-1160 / DSM 100696 / MI-1) (Desulfotomaculum reducens).